The primary structure comprises 254 residues: Imidazole glycerol phosphate synthase subunit HisF (254 aa).

Active-site residues include Asp12 and Asp131.

The protein belongs to the HisA/HisF family. As to quaternary structure, heterodimer of HisH and HisF.

Its subcellular location is the cytoplasm. The enzyme catalyses 5-[(5-phospho-1-deoxy-D-ribulos-1-ylimino)methylamino]-1-(5-phospho-beta-D-ribosyl)imidazole-4-carboxamide + L-glutamine = D-erythro-1-(imidazol-4-yl)glycerol 3-phosphate + 5-amino-1-(5-phospho-beta-D-ribosyl)imidazole-4-carboxamide + L-glutamate + H(+). Its pathway is amino-acid biosynthesis; L-histidine biosynthesis; L-histidine from 5-phospho-alpha-D-ribose 1-diphosphate: step 5/9. In terms of biological role, IGPS catalyzes the conversion of PRFAR and glutamine to IGP, AICAR and glutamate. The HisF subunit catalyzes the cyclization activity that produces IGP and AICAR from PRFAR using the ammonia provided by the HisH subunit. This is Imidazole glycerol phosphate synthase subunit HisF from Herminiimonas arsenicoxydans.